A 1001-amino-acid chain; its full sequence is Translation initiation factor IF-2 (1001 aa).

The interval 56 to 418 (PDYVHDPNAV…VEAGPPPISR (363 aa)) is disordered. A compositionally biased stretch (basic and acidic residues) spans 70 to 84 (TEAHEERHEHEEAHE). Residues 85 to 108 (PAAAPKAAVEPETPVAPAPEAAPA) show a composition bias toward low complexity. Positions 109 to 120 (AKEERPAPEEPA) are enriched in basic and acidic residues. Composition is skewed to pro residues over residues 136 to 170 (IHPPVGATPPPRPEGPRAAPAPPLPPPAPQVPHAP), 180 to 194 (PARPEPPAHHPPSQT), 204 to 217 (RPAPPSAKPLPTTT), 229 to 252 (QPFPSSPAPGAPQRPQAIPRPPQQ), 305 to 322 (PAAPRPGVPKAPSAPVPG), and 345 to 357 (GMPPSRPGGPRPQ). Over residues 379 to 410 (SRGRPGDRRPVRQQRERTEEEKILRPQRRHVE) the composition is skewed to basic and acidic residues. A tr-type G domain is found at 499–668 (RRAPVVTIMG…LLVADMQDLK (170 aa)). Positions 508-515 (GHVDHGKT) are G1. Residue 508 to 515 (GHVDHGKT) coordinates GTP. The segment at 533 to 537 (GITQH) is G2. The interval 554–557 (DTPG) is G3. GTP-binding positions include 554-558 (DTPGH) and 608-611 (NKID). The tract at residues 608-611 (NKID) is G4. The G5 stretch occupies residues 644-646 (SAR).

Belongs to the TRAFAC class translation factor GTPase superfamily. Classic translation factor GTPase family. IF-2 subfamily.

The protein localises to the cytoplasm. One of the essential components for the initiation of protein synthesis. Protects formylmethionyl-tRNA from spontaneous hydrolysis and promotes its binding to the 30S ribosomal subunits. Also involved in the hydrolysis of GTP during the formation of the 70S ribosomal complex. This Solibacter usitatus (strain Ellin6076) protein is Translation initiation factor IF-2.